Consider the following 122-residue polypeptide: Structural protein p14.5 (122 aa).

2 disordered regions span residues 1 to 27 and 85 to 122; these read MADF…LEYD and TSLV…HKSK. The residue at position 2 (alanine 2) is an N-acetylalanine; by host. Residues 105-122 show a composition bias toward basic residues; sequence KPKKKKHLFPKLSSHKSK.

Belongs to the asfivirus structural protein p14.5 family. In terms of assembly, interacts with the major capsid protein. Interacts with host IRF3; this interaction interferes with the recruitment of IRF3 to TBK1. In terms of processing, acetylated.

It is found in the virion. In terms of biological role, structural protein required for transport of intracellular particles from the assembly sites to the plasma membrane. Binds to both ssDNA and dsDNA. Suppressed the activation of the cGAS/STING pathway by interfering with the recruitment of IRF3 to TBK1, which in turn suppresses IRF3 phosphorylation, decreasing interferon production. The polypeptide is Structural protein p14.5 (African swine fever virus (isolate Tick/Malawi/Lil 20-1/1983) (ASFV)).